We begin with the raw amino-acid sequence, 148 residues long: MFDITLLILLALAGLGFVSHNMAVTVSVLVLIVIRMTPLSAWFPWVEKQGVTVGIIILTISVMAPIASGTLPTSTLFHAFLNWKSLVAIAVGVFVSWLGGKGVALMGSQPSIVAGLLVGTVLGVALFRGVPVGPLIAAGLVSLLIGRQ.

A run of 4 helical transmembrane segments spans residues 4 to 24, 51 to 71, 86 to 106, and 112 to 132; these read ITLL…NMAV, VTVG…SGTL, LVAI…VALM, and IVAG…GVPV.

Belongs to the UPF0756 family.

It is found in the cell membrane. This chain is UPF0756 membrane protein ESA_02180, found in Cronobacter sakazakii (strain ATCC BAA-894) (Enterobacter sakazakii).